The primary structure comprises 226 residues: Leucyl/phenylalanyl-tRNA--protein transferase (226 aa).

Belongs to the L/F-transferase family.

Its subcellular location is the cytoplasm. The catalysed reaction is N-terminal L-lysyl-[protein] + L-leucyl-tRNA(Leu) = N-terminal L-leucyl-L-lysyl-[protein] + tRNA(Leu) + H(+). It carries out the reaction N-terminal L-arginyl-[protein] + L-leucyl-tRNA(Leu) = N-terminal L-leucyl-L-arginyl-[protein] + tRNA(Leu) + H(+). The enzyme catalyses L-phenylalanyl-tRNA(Phe) + an N-terminal L-alpha-aminoacyl-[protein] = an N-terminal L-phenylalanyl-L-alpha-aminoacyl-[protein] + tRNA(Phe). Functions in the N-end rule pathway of protein degradation where it conjugates Leu, Phe and, less efficiently, Met from aminoacyl-tRNAs to the N-termini of proteins containing an N-terminal arginine or lysine. The polypeptide is Leucyl/phenylalanyl-tRNA--protein transferase (Bradyrhizobium sp. (strain ORS 278)).